Consider the following 1115-residue polypeptide: Calcium-transporting ATPase PAT1 (1115 aa).

The Stromal portion of the chain corresponds to 1–99 (MTGSHEMESI…SIVLDALSDH (99 aa)). Residues 100–120 (ILILLIVAAVVSIVLGSIDYT) form a helical membrane-spanning segment. At 121–126 (SDHPET) the chain is on the lumenal side. The chain crosses the membrane as a helical span at residues 127 to 147 (GWIDGVAILVAVILVVGITSL). The Stromal portion of the chain corresponds to 148 to 235 (NDFKNQARFR…KGQPQDNMDP (88 aa)). Residues 236–256 (FLISGSMVIEGFGTMLVTAVG) traverse the membrane as a helical segment. Topologically, residues 257-287 (VNSFNGKTMMGLRVASEDTPLQMKLSVLASR) are lumenal. A helical membrane pass occupies residues 288-308 (IGYFGMGAAILMLLIAIPKYF). At 309-328 (IQRKVHDIEITREDAQPIVQ) the chain is on the stromal side. Residues 329–349 (LVISAITIVVVAVPEGLPLAV) form a helical membrane-spanning segment. Residues 350-735 (TMALAYGMMK…GRNIYDAICK (386 aa)) lie on the Lumenal side of the membrane. The active-site 4-aspartylphosphate intermediate is the Asp385. 2 residues coordinate Mg(2+): Asp678 and Asp682. The helical transmembrane segment at 736-756 (FLQFQLTVNVVAVTVAFIGTL) threads the bilayer. Residues 757 to 832 (TSDVVEDKDN…GKNAPLITRS (76 aa)) are Stromal-facing. Residues 762–784 (EDKDNSSSSGSADKVTEEEPRQG) are disordered. The chain crosses the membrane as a helical span at residues 833–853 (MWKNIIGQAALQLAILFTILY). Topologically, residues 854–873 (QGHNIFQHFVPQAHGPIIKN) are lumenal. Residues 874-894 (GLHHYTLVFNCFVFLQLFNEI) traverse the membrane as a helical segment. The Stromal segment spans residues 895–913 (NARVLGSRTNPFKNFFNNP). A helical transmembrane segment spans residues 914–934 (IFIAVMIFTLGVQIIFVTFGG). Residues 935-943 (SATSTDSLY) lie on the Lumenal side of the membrane. A helical membrane pass occupies residues 944–964 (IVEWICCVVVGAISLPVGLLL). The Stromal portion of the chain corresponds to 965–1115 (RKIPIREPVV…LHLPVNQINN (151 aa)). Positions 984-1056 (AVYTSPSPNP…IPSSSSNLVN (73 aa)) are disordered. Over residues 1040–1053 (NDNINTPIPSSSSN) the composition is skewed to low complexity.

The protein belongs to the cation transport ATPase (P-type) (TC 3.A.3) family. Type IIB subfamily.

It is found in the contractile vacuole membrane. The protein localises to the cell membrane. The catalysed reaction is Ca(2+)(in) + ATP + H2O = Ca(2+)(out) + ADP + phosphate + H(+). In terms of biological role, calcium ATPase involved in Ca(2+) homeostasis as a component of the contractile vacuole complex. The chain is Calcium-transporting ATPase PAT1 (patA) from Dictyostelium discoideum (Social amoeba).